A 483-amino-acid chain; its full sequence is Aspartyl/glutamyl-tRNA(Asn/Gln) amidotransferase subunit B (483 aa).

This sequence belongs to the GatB/GatE family. GatB subfamily. As to quaternary structure, heterotrimer of A, B and C subunits.

It carries out the reaction L-glutamyl-tRNA(Gln) + L-glutamine + ATP + H2O = L-glutaminyl-tRNA(Gln) + L-glutamate + ADP + phosphate + H(+). The catalysed reaction is L-aspartyl-tRNA(Asn) + L-glutamine + ATP + H2O = L-asparaginyl-tRNA(Asn) + L-glutamate + ADP + phosphate + 2 H(+). Allows the formation of correctly charged Asn-tRNA(Asn) or Gln-tRNA(Gln) through the transamidation of misacylated Asp-tRNA(Asn) or Glu-tRNA(Gln) in organisms which lack either or both of asparaginyl-tRNA or glutaminyl-tRNA synthetases. The reaction takes place in the presence of glutamine and ATP through an activated phospho-Asp-tRNA(Asn) or phospho-Glu-tRNA(Gln). This chain is Aspartyl/glutamyl-tRNA(Asn/Gln) amidotransferase subunit B, found in Rickettsia typhi (strain ATCC VR-144 / Wilmington).